The chain runs to 527 residues: V-set and immunoglobulin domain-containing protein 10 (527 aa).

The signal sequence occupies residues 1-13 (MWTRRWIQFLVLC). Ig-like C2-type domains follow at residues 14 to 111 (LHLW…LKVS), 123 to 212 (PTRT…RQLL), 216 to 306 (PPIT…CQIQ), and 310 to 399 (PLLE…KEIN). The Extracellular segment spans residues 23–409 (YLGVFRGDVN…VWLTVNKPHN (387 aa)). 16 N-linked (GlcNAc...) asparagine glycosylation sites follow: asparagine 32, asparagine 41, asparagine 52, asparagine 64, asparagine 74, asparagine 90, asparagine 129, asparagine 139, asparagine 191, asparagine 206, asparagine 226, asparagine 260, asparagine 276, asparagine 325, asparagine 346, and asparagine 375. Cysteine 144 and cysteine 194 are joined by a disulfide. Cysteine 238 and cysteine 288 are disulfide-bonded. The cysteines at positions 330 and 387 are disulfide-linked. Residues 410–430 (IVGLVTALLLLFLLVVAIITG) form a helical membrane-spanning segment. Residues 431-527 (TVLYCDPQIY…TGEENQNEEI (97 aa)) are Cytoplasmic-facing. A disordered region spans residues 501 to 527 (RPPESTSSDLFSEVSDDTGEENQNEEI). Residues 514–527 (VSDDTGEENQNEEI) show a composition bias toward acidic residues.

The protein resides in the membrane. The protein is V-set and immunoglobulin domain-containing protein 10 (vsig10) of Xenopus laevis (African clawed frog).